The sequence spans 360 residues: MKAIIVLLMVVTSNADRICTGITSSNSPHVVKTATQGEVNVTGVIPLTTTPTKSHFANLKGTKTRGKLCPNCLNCTDLDVALARPMCIGTIPSAKASILHEVRPVTSGCFPIMHDRTKIRQLPNLLRGYENIRLSTHNVINAERAPGGPYRLGTSGSCPNVTSRSGFFATMAWAVPRDNKTATNPLTVEVPYICTKGEDQITVWGFHSDNKTQMKNLYGDSNPQKFTSSANGVTTHYVSQIGGFPNQTEDGGLPQSGRIVVDYMVQKPGKTGTIVYQRGVLLPQKVWCASGRSKVIKGSLPLIGEADCLHEKYGGLNKSKPYYTGEHAKAIGNCPIWVKTPLKLANGTKYRPPAKLLKER.

The signal sequence occupies residues 1-15 (MKAIIVLLMVVTSNA). N-linked (GlcNAc...) asparagine; by host glycans are attached at residues asparagine 40, asparagine 74, asparagine 160, asparagine 179, asparagine 210, asparagine 246, asparagine 317, and asparagine 346.

This sequence belongs to the influenza viruses hemagglutinin family. As to quaternary structure, homotrimer of disulfide-linked HA1-HA2. Post-translationally, in natural infection, inactive HA is matured into HA1 and HA2 outside the cell by one or more trypsin-like, arginine-specific endoprotease secreted by the bronchial epithelial cells. One identified protease that may be involved in this process is secreted in lungs by club cells. In terms of processing, palmitoylated.

The protein resides in the virion membrane. Its subcellular location is the host apical cell membrane. In terms of biological role, binds to sialic acid-containing receptors on the cell surface, bringing about the attachment of the virus particle to the cell. Plays a major role in the determination of host range restriction and virulence. Class I viral fusion protein. Responsible for penetration of the virus into the cell cytoplasm by mediating the fusion of the membrane of the endocytosed virus particle with the endosomal membrane. Low pH in endosomes induce an irreversible conformational change in HA2, releasing the fusion hydrophobic peptide. Several trimers are required to form a competent fusion pore. This chain is Hemagglutinin (HA), found in Influenza B virus (strain B/New York/3/1990).